The chain runs to 1117 residues: Protein cup (1117 aa).

Positions 1-106 (MQMAEAEQEN…PPPPPPLPTS (106 aa)) are disordered. 2 stretches are compositionally biased toward pro residues: residues 54-64 (YPPPPPPPTPV) and 95-104 (CAPPPPPPLP). A phosphoserine mark is found at S263 and S270. A disordered region spans residues 270 to 326 (SPRKQVASKEAVPEQQSSQVQQKRPPSTGIHKPGSLRAPKAVRPTTAPVVSSKPVKS). Over residues 283 to 294 (EQQSSQVQQKRP) the composition is skewed to polar residues. A YXXXXLphi motif 1 motif is present at residues 327 to 333 (YTRSRLM). 2 positions are modified to phosphoserine: S347 and S350. The YXXXXLphi motif 2 signature appears at 363-369 (ELEGRLR). 6 disordered regions span residues 493–528 (ISSQ…EDLS), 596–618 (KEGN…KMDH), 654–673 (TEHQ…SFQF), 679–728 (SQQN…SSSS), 984–1004 (GAKH…QARP), and 1016–1051 (ISGG…FQSF). A Phosphothreonine modification is found at T503. Phosphoserine occurs at positions 509, 513, 520, 523, and 524. Composition is skewed to low complexity over residues 679 to 712 (SQQN…NTNN) and 988 to 1001 (QAQQ…QQRQ).

This sequence belongs to the 4E-T/EIF4E-T family. Component of the osk RNP complex, which is composed of at least exu, yps, aret/bruno, cup, and the mRNA of osk. Interacts with the decapping activators me31B and tral. Component of the nanos RNP complex, which is composed of at least smg, cup, tral, me31B, the CCR4-NOT complex members Rga/NOT2 and Caf1, and the mRNA of nanos (nos). Interacts with btz. Recruited to the 3'-UTR of nos and osk mRNAs by smg and btz, respectively. Forms a ribonucleoprotein complex (RNP) containing at least me31B, eIF4E1, cup, tral and pAbp; this interaction is required for the translational silencing of maternal mRNAs during the maternal-to-zygotic transition. No interaction was detected with pAbp in 1-5 hour embryos. Interacts with osk and vas. Interacts with Pop2, twin/CCR4, Rga, Not3 and Not1 which are all core components of the CCR4-NOT deadenylase complex; interaction with the complex is required for cup deadenylation activity. Interacts with nanos. Interacts with smg. Interacts (via YXXXXLphi motifs) with eIF4E1; the interaction promotes retention of cup in the cytoplasm. Interacts with orb; the interaction represses the orb positive autoregulatory loop. Interacts with Nup154. Predominantly expressed in ovaries and in 0-2 hours old embryos. Weakly expressed in testis. Expressed in young embryos through stage 9, then it decreases throughout the rest of embryogenesis. In ovaries, it is expressed in germ cells throughout pre-vitellogenic development, but is not expressed in the somatic follicle cells. In germarial cysts, the protein (and not the transcripts) is transported selectively into the oocyte.

The protein resides in the cytoplasm. Its subcellular location is the nucleus. It localises to the cytoplasmic ribonucleoprotein granule. Adapter protein that plays a central role in localization of transcripts in the oocyte and in young embryos. Maintains RNA targets in a repressed state by promoting their deadenylation and protects deadenylated mRNAs from further degradation. Binds to and recruits eIF-4E to the 3'-UTR of some mRNA targets which prevents interaction between eIF4E1 and eIF4G. This may contribute to translational repression but does not appear to be necessary for it to occur. Can promote translational repression independently of deadenylation and eIF4E1 binding. Required for correct localization of eIF4E1 in the developing oocyte. Required for translational repression of oskar (osk) mRNA. Also required for the translational repression of nanos (nos) mRNA. Promotes the accumulation of the germ plasm components osk, vas and stau at the posterior pole of the oocyte and is required for germ cell development. Represses orb positive autoregulatory activity which prevents premature activation of orb and ensures its accumulation specifically in the developing oocyte. In 0-1 hour embryos, forms a complex with me31B, cup, tral and pAbp which binds to various mRNAs including maternal mRNAs, and down-regulates their expression during the maternal-to-zygotic transition. This Drosophila melanogaster (Fruit fly) protein is Protein cup (cup).